The following is a 131-amino-acid chain: Large ribosomal subunit protein bL17 (131 aa).

The protein belongs to the bacterial ribosomal protein bL17 family. As to quaternary structure, part of the 50S ribosomal subunit. Contacts protein L32.

This Cupriavidus metallidurans (strain ATCC 43123 / DSM 2839 / NBRC 102507 / CH34) (Ralstonia metallidurans) protein is Large ribosomal subunit protein bL17.